A 442-amino-acid chain; its full sequence is Cytokine receptor-like factor 3 (442 aa).

Met-1 bears the N-acetylmethionine mark. Residues Glu-10–Gln-57 are a coiled coil. Residues Pro-181 to Pro-274 form the Fibronectin type-III domain.

It belongs to the cytokine receptor-like factor 3 family. In terms of tissue distribution, expressed in several embryonic and adult tissues, including adult and fetal brain, liver, spleen and pancreas. Expressed in adult, but not fetal kidney. Expressed in skin and squamous cell carcinoma (SCC) and in several other cancer types. Also detected in lesion actinic keratosis (AK).

The protein localises to the cytoplasm. Its function is as follows. May play a role in the negative regulation of cell cycle progression. The chain is Cytokine receptor-like factor 3 (CRLF3) from Homo sapiens (Human).